A 380-amino-acid chain; its full sequence is Succinate--CoA ligase [ADP-forming] subunit beta (380 aa).

Positions 9 to 236 (KGVFADAGIP…EAAGDELEAK (228 aa)) constitute an ATP-grasp domain. ATP contacts are provided by residues lysine 45, 52–54 (GRG), glutamate 91, valine 94, and glutamate 99. Residues asparagine 191 and aspartate 205 each coordinate Mg(2+). Substrate-binding positions include asparagine 256 and 313–315 (GIT).

It belongs to the succinate/malate CoA ligase beta subunit family. As to quaternary structure, heterotetramer of two alpha and two beta subunits. It depends on Mg(2+) as a cofactor.

The enzyme catalyses succinate + ATP + CoA = succinyl-CoA + ADP + phosphate. It catalyses the reaction GTP + succinate + CoA = succinyl-CoA + GDP + phosphate. It functions in the pathway carbohydrate metabolism; tricarboxylic acid cycle; succinate from succinyl-CoA (ligase route): step 1/1. Succinyl-CoA synthetase functions in the citric acid cycle (TCA), coupling the hydrolysis of succinyl-CoA to the synthesis of either ATP or GTP and thus represents the only step of substrate-level phosphorylation in the TCA. The beta subunit provides nucleotide specificity of the enzyme and binds the substrate succinate, while the binding sites for coenzyme A and phosphate are found in the alpha subunit. The polypeptide is Succinate--CoA ligase [ADP-forming] subunit beta (Natronomonas pharaonis (strain ATCC 35678 / DSM 2160 / CIP 103997 / JCM 8858 / NBRC 14720 / NCIMB 2260 / Gabara) (Halobacterium pharaonis)).